Reading from the N-terminus, the 317-residue chain is Beta-ketoacyl-[acyl-carrier-protein] synthase III (317 aa).

Residues Cys112 and His244 contribute to the active site. The tract at residues 245-249 (QANLR) is ACP-binding. Asn274 is an active-site residue.

The protein belongs to the thiolase-like superfamily. FabH family. In terms of assembly, homodimer.

The protein localises to the cytoplasm. It catalyses the reaction malonyl-[ACP] + acetyl-CoA + H(+) = 3-oxobutanoyl-[ACP] + CO2 + CoA. Its pathway is lipid metabolism; fatty acid biosynthesis. In terms of biological role, catalyzes the condensation reaction of fatty acid synthesis by the addition to an acyl acceptor of two carbons from malonyl-ACP. Catalyzes the first condensation reaction which initiates fatty acid synthesis and may therefore play a role in governing the total rate of fatty acid production. Possesses both acetoacetyl-ACP synthase and acetyl transacylase activities. Its substrate specificity determines the biosynthesis of branched-chain and/or straight-chain of fatty acids. This Citrobacter koseri (strain ATCC BAA-895 / CDC 4225-83 / SGSC4696) protein is Beta-ketoacyl-[acyl-carrier-protein] synthase III.